Reading from the N-terminus, the 470-residue chain is Sulfate adenylyltransferase subunit 1 (470 aa).

The region spanning 22–237 (KEVLRFITCG…LEEVPVKSEE (216 aa)) is the tr-type G domain. A G1 region spans residues 31–38 (GSVDDGKS). Position 31–38 (31–38 (GSVDDGKS)) interacts with GTP. The segment at 89–93 (GITID) is G2. Residues 110–113 (DTPG) are G3. GTP is bound by residues 110–114 (DTPGH) and 165–168 (NKMD). A G4 region spans residues 165–168 (NKMD). The interval 202–204 (SAK) is G5.

Belongs to the TRAFAC class translation factor GTPase superfamily. Classic translation factor GTPase family. CysN/NodQ subfamily. In terms of assembly, heterodimer composed of CysD, the smaller subunit, and CysN.

The catalysed reaction is sulfate + ATP + H(+) = adenosine 5'-phosphosulfate + diphosphate. It functions in the pathway sulfur metabolism; hydrogen sulfide biosynthesis; sulfite from sulfate: step 1/3. In terms of biological role, with CysD forms the ATP sulfurylase (ATPS) that catalyzes the adenylation of sulfate producing adenosine 5'-phosphosulfate (APS) and diphosphate, the first enzymatic step in sulfur assimilation pathway. APS synthesis involves the formation of a high-energy phosphoric-sulfuric acid anhydride bond driven by GTP hydrolysis by CysN coupled to ATP hydrolysis by CysD. The sequence is that of Sulfate adenylyltransferase subunit 1 from Methylorubrum populi (strain ATCC BAA-705 / NCIMB 13946 / BJ001) (Methylobacterium populi).